The chain runs to 96 residues: Small ribosomal subunit protein bS18 (96 aa).

Residues 1-22 show a composition bias toward basic and acidic residues; it reads MYKDIDSHQRDSRTDGHQDGFK. The tract at residues 1–25 is disordered; it reads MYKDIDSHQRDSRTDGHQDGFKKNP.

This sequence belongs to the bacterial ribosomal protein bS18 family. Part of the 30S ribosomal subunit. Forms a tight heterodimer with protein bS6.

In terms of biological role, binds as a heterodimer with protein bS6 to the central domain of the 16S rRNA, where it helps stabilize the platform of the 30S subunit. The polypeptide is Small ribosomal subunit protein bS18 (Borrelia duttonii (strain Ly)).